The sequence spans 842 residues: Elongation factor 2 (842 aa).

In terms of domain architecture, tr-type G spans 17-253 (TNVRNMSVIA…LWGDSYFNPK (237 aa)). Residues 26–33 (AHVDHGKS), 158–161 (NKVD), and 213–215 (SGL) contribute to the GTP site. Residue His699 is modified to Diphthamide.

This sequence belongs to the TRAFAC class translation factor GTPase superfamily. Classic translation factor GTPase family. EF-G/EF-2 subfamily.

Its subcellular location is the cytoplasm. The catalysed reaction is GTP + H2O = GDP + phosphate + H(+). In terms of biological role, catalyzes the GTP-dependent ribosomal translocation step during translation elongation. During this step, the ribosome changes from the pre-translocational (PRE) to the post-translocational (POST) state as the newly formed A-site-bound peptidyl-tRNA and P-site-bound deacylated tRNA move to the P and E sites, respectively. Catalyzes the coordinated movement of the two tRNA molecules, the mRNA and conformational changes in the ribosome. This chain is Elongation factor 2 (EFT1), found in Kluyveromyces lactis (strain ATCC 8585 / CBS 2359 / DSM 70799 / NBRC 1267 / NRRL Y-1140 / WM37) (Yeast).